The chain runs to 364 residues: Tyrosine-protein phosphatase YVH1 (364 aa).

The 163-residue stretch at 11 to 173 (EVTRILGGIY…LHLFEKMGGD (163 aa)) folds into the Tyrosine-protein phosphatase domain. The active-site Phosphocysteine intermediate is Cys-117. Ser-196 is modified (phosphoserine).

Belongs to the protein-tyrosine phosphatase family. Non-receptor class dual specificity subfamily.

It catalyses the reaction O-phospho-L-tyrosyl-[protein] + H2O = L-tyrosyl-[protein] + phosphate. In terms of biological role, may be directly involved in signal transduction and/or cell cycle regulation. It is necessary for maintaining growth rate or spore germination. Could show both activity toward tyrosine-protein phosphate as well as with serine-protein phosphate. In Saccharomyces cerevisiae (strain ATCC 204508 / S288c) (Baker's yeast), this protein is Tyrosine-protein phosphatase YVH1 (YVH1).